The chain runs to 334 residues: UDP-N-acetylenolpyruvoylglucosamine reductase (334 aa).

The region spanning 16 to 186 is the FAD-binding PCMH-type domain; the sequence is INVFAKKIII…LSVGIKLPKT (171 aa). R162 is an active-site residue. Residue S232 is the Proton donor of the active site. E329 is a catalytic residue.

It belongs to the MurB family. The cofactor is FAD.

It is found in the cytoplasm. It carries out the reaction UDP-N-acetyl-alpha-D-muramate + NADP(+) = UDP-N-acetyl-3-O-(1-carboxyvinyl)-alpha-D-glucosamine + NADPH + H(+). The protein operates within cell wall biogenesis; peptidoglycan biosynthesis. Its function is as follows. Cell wall formation. The chain is UDP-N-acetylenolpyruvoylglucosamine reductase from Buchnera aphidicola subsp. Baizongia pistaciae (strain Bp).